The chain runs to 706 residues: DNA ligase (706 aa).

Residues 1–20 form a disordered region; the sequence is MSATAGTADESGVASAAASA. Residues 50 to 54, 99 to 100, and Glu128 contribute to the NAD(+) site; these read DAEYD and SL. Lys130 (N6-AMP-lysine intermediate) is an active-site residue. NAD(+) is bound by residues Arg151, Glu188, Lys304, and Lys328. Cys422, Cys425, Cys440, and Cys446 together coordinate Zn(2+). Positions 604–694 constitute a BRCT domain; the sequence is EGPRPLDGVT…VDAASKLAVP (91 aa).

Belongs to the NAD-dependent DNA ligase family. LigA subfamily. The cofactor is Mg(2+). Requires Mn(2+) as cofactor.

The enzyme catalyses NAD(+) + (deoxyribonucleotide)n-3'-hydroxyl + 5'-phospho-(deoxyribonucleotide)m = (deoxyribonucleotide)n+m + AMP + beta-nicotinamide D-nucleotide.. In terms of biological role, DNA ligase that catalyzes the formation of phosphodiester linkages between 5'-phosphoryl and 3'-hydroxyl groups in double-stranded DNA using NAD as a coenzyme and as the energy source for the reaction. It is essential for DNA replication and repair of damaged DNA. In Frankia casuarinae (strain DSM 45818 / CECT 9043 / HFP020203 / CcI3), this protein is DNA ligase.